Reading from the N-terminus, the 804-residue chain is Leucine--tRNA ligase (804 aa).

Positions 40 to 51 (PYPSGAGLHVGH) match the 'HIGH' region motif. The 'KMSKS' region motif lies at 576–580 (KMSKS). Lys579 contributes to the ATP binding site.

The protein belongs to the class-I aminoacyl-tRNA synthetase family.

It localises to the cytoplasm. The catalysed reaction is tRNA(Leu) + L-leucine + ATP = L-leucyl-tRNA(Leu) + AMP + diphosphate. The protein is Leucine--tRNA ligase of Bacillus subtilis (strain 168).